The following is a 192-amino-acid chain: Probable thymidylate kinase (192 aa).

ATP is bound at residue Gly-8 to Ser-15.

It belongs to the thymidylate kinase family.

It carries out the reaction dTMP + ATP = dTDP + ADP. This is Probable thymidylate kinase from Pyrobaculum aerophilum (strain ATCC 51768 / DSM 7523 / JCM 9630 / CIP 104966 / NBRC 100827 / IM2).